We begin with the raw amino-acid sequence, 232 residues long: Mediator of RNA polymerase II transcription subunit 18 (232 aa).

It belongs to the Mediator complex subunit 18 family. In terms of assembly, component of the Mediator complex.

The protein resides in the nucleus. Its function is as follows. Component of the Mediator complex, a coactivator involved in the regulated transcription of nearly all RNA polymerase II-dependent genes. Mediator functions as a bridge to convey information from gene-specific regulatory proteins to the basal RNA polymerase II transcription machinery. Mediator is recruited to promoters by direct interactions with regulatory proteins and serves as a scaffold for the assembly of a functional preinitiation complex with RNA polymerase II and the general transcription factors. The sequence is that of Mediator of RNA polymerase II transcription subunit 18 (mdt-18) from Caenorhabditis elegans.